A 1011-amino-acid chain; its full sequence is Protein translocase subunit SecA (1011 aa).

Residues glutamine 87, 105-109, and aspartate 500 contribute to the ATP site; that span reads GEGKT. The disordered stretch occupies residues 969–1011; it reads SLPLGANPAPARPQPAVMQEQECPCGSGKPFNKCHGGEDEATA. Positions 991, 993, 1002, and 1003 each coordinate Zn(2+).

This sequence belongs to the SecA family. In terms of assembly, monomer and homodimer. Part of the essential Sec protein translocation apparatus which comprises SecA, SecYEG and auxiliary proteins SecDF-YajC and YidC. The cofactor is Zn(2+).

The protein resides in the cell inner membrane. It is found in the cytoplasm. The enzyme catalyses ATP + H2O + cellular proteinSide 1 = ADP + phosphate + cellular proteinSide 2.. Part of the Sec protein translocase complex. Interacts with the SecYEG preprotein conducting channel. Has a central role in coupling the hydrolysis of ATP to the transfer of proteins into and across the cell membrane, serving as an ATP-driven molecular motor driving the stepwise translocation of polypeptide chains across the membrane. This chain is Protein translocase subunit SecA, found in Sorangium cellulosum (strain So ce56) (Polyangium cellulosum (strain So ce56)).